The sequence spans 154 residues: 6,7-dimethyl-8-ribityllumazine synthase (154 aa).

5-amino-6-(D-ribitylamino)uracil-binding positions include phenylalanine 22, 56–58, and 80–82; these read AFE and TVI. 85–86 contributes to the (2S)-2-hydroxy-3-oxobutyl phosphate binding site; the sequence is AT. Catalysis depends on histidine 88, which acts as the Proton donor. Phenylalanine 113 is a 5-amino-6-(D-ribitylamino)uracil binding site. Arginine 127 lines the (2S)-2-hydroxy-3-oxobutyl phosphate pocket.

It belongs to the DMRL synthase family. In terms of assembly, forms an icosahedral capsid composed of 60 subunits, arranged as a dodecamer of pentamers.

The enzyme catalyses (2S)-2-hydroxy-3-oxobutyl phosphate + 5-amino-6-(D-ribitylamino)uracil = 6,7-dimethyl-8-(1-D-ribityl)lumazine + phosphate + 2 H2O + H(+). It functions in the pathway cofactor biosynthesis; riboflavin biosynthesis; riboflavin from 2-hydroxy-3-oxobutyl phosphate and 5-amino-6-(D-ribitylamino)uracil: step 1/2. Its function is as follows. Catalyzes the formation of 6,7-dimethyl-8-ribityllumazine by condensation of 5-amino-6-(D-ribitylamino)uracil with 3,4-dihydroxy-2-butanone 4-phosphate. This is the penultimate step in the biosynthesis of riboflavin. The polypeptide is 6,7-dimethyl-8-ribityllumazine synthase (Bacillus amyloliquefaciens (Bacillus velezensis)).